The primary structure comprises 744 residues: Collagen alpha-1(VIII) chain (744 aa).

A signal peptide spans 1–27 (MAVLPGPLQLLGVLLTISLSSIRLIQA). Positions 29–117 (AYYGIKPLPP…GKEIPLASLR (89 aa)) are nonhelical region (NC2). 2 disordered regions span residues 115–393 (SLRG…GEPG) and 459–589 (GPKG…PDMG). The segment at 118 to 571 (GEQGPRGEPG…PGPPGPPGPP (454 aa)) is triple-helical region (COL1). A compositionally biased stretch (pro residues) spans 128-137 (PRGPPGPPGL). The segment covering 168–178 (KPGAMGMPGAK) has biased composition (low complexity). Gly residues-rich tracts occupy residues 203–217 (GLPGIGKPGGPGLPG) and 328–337 (GFPGGKGEQG). Composition is skewed to low complexity over residues 466 to 496 (QKGVPGLPGVPGLLGPKGEPGIPGDQGLQGP) and 538 to 556 (AGLHGPPGKPGALGPQGQP). Over residues 558 to 581 (LPGPPGPPGPPGPPAVMPPTPPPQ) the composition is skewed to pro residues. The segment at 572–744 (AVMPPTPPPQ…SFSGYLLYPM (173 aa)) is nonhelical region (NC1). Positions 611 to 744 (PAYEMPAFTA…SFSGYLLYPM (134 aa)) constitute a C1q domain.

In terms of assembly, homotrimers, or heterotrimers in association with alpha 2(VIII) type collagens. Four homotrimers can form a tetrahedron stabilized by central interacting C-terminal NC1 trimers. Post-translationally, prolines at the third position of the tripeptide repeating unit (G-X-Y) are hydroxylated in some or all of the chains. Proteolytically cleaved by neutrophil elastase, in vitro. Proteolytic processing produces the C-terminal NC1 domain fragment, vastatin. In terms of tissue distribution, expressed primarily in the subendothelium of large blood vessels. Also expressed in arterioles and venules in muscle, heart, kidney, spleen, umbilical cord, liver and lung and is also found in connective tissue layers around hair follicles, around nerve bundles in muscle, in the dura of the optic nerve, in cornea and sclera, and in the perichondrium of cartilaginous tissues. In the kidney, expressed in mesangial cells, glomerular endothelial cells, and tubular epithelial cells. Also expressed in mast cells, and in astrocytes during the repair process. Expressed in Descemet's membrane. Specifically expressed in peritoneal fibroblasts and mesothelial cells.

Its subcellular location is the secreted. It is found in the extracellular space. It localises to the extracellular matrix. The protein localises to the basement membrane. Macromolecular component of the subendothelium. Major component of the Descemet's membrane (basement membrane) of corneal endothelial cells. Also a component of the endothelia of blood vessels. Necessary for migration and proliferation of vascular smooth muscle cells and thus, has a potential role in the maintenance of vessel wall integrity and structure, in particular in atherogenesis. Functionally, vastatin, the C-terminal fragment comprising the NC1 domain, inhibits aortic endothelial cell proliferation and causes cell apoptosis. The chain is Collagen alpha-1(VIII) chain (COL8A1) from Homo sapiens (Human).